A 119-amino-acid polypeptide reads, in one-letter code: Protein TusC (119 aa).

Belongs to the DsrF/TusC family. Heterohexamer, formed by a dimer of trimers. The hexameric TusBCD complex contains 2 copies each of TusB, TusC and TusD. The TusBCD complex interacts with TusE.

Its subcellular location is the cytoplasm. Part of a sulfur-relay system required for 2-thiolation of 5-methylaminomethyl-2-thiouridine (mnm(5)s(2)U) at tRNA wobble positions. In Escherichia coli O127:H6 (strain E2348/69 / EPEC), this protein is Protein TusC.